Reading from the N-terminus, the 370-residue chain is tRNA N6-adenosine threonylcarbamoyltransferase (370 aa).

Fe cation-binding residues include His122 and His126. Substrate contacts are provided by residues 153 to 157 (LLSGG), Asp186, Gly199, and Asn298. Position 326 (Asp326) interacts with Fe cation.

The protein belongs to the KAE1 / TsaD family. It depends on Fe(2+) as a cofactor.

It is found in the cytoplasm. It carries out the reaction L-threonylcarbamoyladenylate + adenosine(37) in tRNA = N(6)-L-threonylcarbamoyladenosine(37) in tRNA + AMP + H(+). In terms of biological role, required for the formation of a threonylcarbamoyl group on adenosine at position 37 (t(6)A37) in tRNAs that read codons beginning with adenine. Is involved in the transfer of the threonylcarbamoyl moiety of threonylcarbamoyl-AMP (TC-AMP) to the N6 group of A37, together with TsaE and TsaB. TsaD likely plays a direct catalytic role in this reaction. In Granulibacter bethesdensis (strain ATCC BAA-1260 / CGDNIH1), this protein is tRNA N6-adenosine threonylcarbamoyltransferase.